A 421-amino-acid chain; its full sequence is Histidine--tRNA ligase (421 aa).

It belongs to the class-II aminoacyl-tRNA synthetase family. As to quaternary structure, homodimer.

It is found in the cytoplasm. It carries out the reaction tRNA(His) + L-histidine + ATP = L-histidyl-tRNA(His) + AMP + diphosphate + H(+). The sequence is that of Histidine--tRNA ligase from Coxiella burnetii (strain CbuG_Q212) (Coxiella burnetii (strain Q212)).